The chain runs to 238 residues: Pyridoxine 5'-phosphate synthase (238 aa).

3-amino-2-oxopropyl phosphate is bound at residue asparagine 7. Aspartate 9–histidine 10 contacts 1-deoxy-D-xylulose 5-phosphate. Arginine 18 is a binding site for 3-amino-2-oxopropyl phosphate. The active-site Proton acceptor is histidine 43. 2 residues coordinate 1-deoxy-D-xylulose 5-phosphate: arginine 45 and histidine 50. The Proton acceptor role is filled by glutamate 70. 1-deoxy-D-xylulose 5-phosphate is bound at residue threonine 100. Histidine 190 (proton donor) is an active-site residue. Residues glycine 191 and glycine 212–histidine 213 each bind 3-amino-2-oxopropyl phosphate.

It belongs to the PNP synthase family. In terms of assembly, homooctamer; tetramer of dimers.

The protein resides in the cytoplasm. The catalysed reaction is 3-amino-2-oxopropyl phosphate + 1-deoxy-D-xylulose 5-phosphate = pyridoxine 5'-phosphate + phosphate + 2 H2O + H(+). The protein operates within cofactor biosynthesis; pyridoxine 5'-phosphate biosynthesis; pyridoxine 5'-phosphate from D-erythrose 4-phosphate: step 5/5. Its function is as follows. Catalyzes the complicated ring closure reaction between the two acyclic compounds 1-deoxy-D-xylulose-5-phosphate (DXP) and 3-amino-2-oxopropyl phosphate (1-amino-acetone-3-phosphate or AAP) to form pyridoxine 5'-phosphate (PNP) and inorganic phosphate. The sequence is that of Pyridoxine 5'-phosphate synthase from Prochlorococcus marinus (strain AS9601).